A 199-amino-acid polypeptide reads, in one-letter code: Prolactin-1 (199 aa).

Cystine bridges form between cysteine 4–cysteine 11, cysteine 58–cysteine 174, and cysteine 191–cysteine 199. A glycan (N-linked (GlcNAc...) asparagine) is linked at asparagine 60.

Belongs to the somatotropin/prolactin family. In terms of processing, glycosylated.

The protein resides in the secreted. The polypeptide is Prolactin-1 (Alligator mississippiensis (American alligator)).